Consider the following 250-residue polypeptide: HTH-type transcriptional regulator SarS (250 aa).

2 DNA-binding regions (H-T-H motif) span residues 53-76 (FKKI…VLVK) and 177-200 (LKDL…NLKK).

Belongs to the SarA family.

The protein localises to the cytoplasm. Transcriptional regulator that controls expression of some virulence factors in a cell density-dependent manner. The protein is HTH-type transcriptional regulator SarS (sarS) of Staphylococcus aureus (strain MRSA252).